The following is a 116-amino-acid chain: Large ribosomal subunit protein P2 (116 aa).

Residues 60–116 form a disordered region; the sequence is GKLSSMPSGGGVAAAAGGGGAAAGGGGAAPAAEEKKEEKKEESEEESDDDMGFGLFD. Residues 67–87 are compositionally biased toward gly residues; it reads SGGGVAAAAGGGGAAAGGGGA. The span at 91 to 101 shows a compositional bias: basic and acidic residues; it reads AEEKKEEKKEE.

It belongs to the eukaryotic ribosomal protein P1/P2 family. In terms of assembly, P1 and P2 exist as dimers at the large ribosomal subunit. Phosphorylated.

In terms of biological role, plays an important role in the elongation step of protein synthesis. This chain is Large ribosomal subunit protein P2, found in Branchiostoma floridae (Florida lancelet).